Consider the following 280-residue polypeptide: Four and a half LIM domains protein 3 (280 aa).

Ser-2 bears the N-acetylserine mark. The segment at 7 to 31 adopts a C4-type zinc-finger fold; the sequence is CAKCSESLYGRKYIQTDDGPYCVPC. 2 LIM zinc-binding domains span residues 40 to 92 and 101 to 153; these read CAEC…CNDC and CSAC…CVPC. Lys-157 carries the N6-acetyllysine modification. LIM zinc-binding domains are found at residues 162 to 212 and 221 to 275; these read CARC…CVTC and CSSC…CQGC. Lys-235 bears the N6-acetyllysine mark.

As to quaternary structure, interacts with SOX15; the interaction recruits FHL3 to FOXK1 promoters where it acts as a transcriptional coactivator of FOXK1.

It localises to the nucleus. The protein localises to the cytoplasm. Its function is as follows. Recruited by SOX15 to FOXK1 promoters where it acts as a transcriptional coactivator of FOXK1. The sequence is that of Four and a half LIM domains protein 3 (FHL3) from Bos taurus (Bovine).